A 270-amino-acid polypeptide reads, in one-letter code: MMNRIHAVILDWAGTTVDFGSFAPTQIFVEAFRQAFDVEITLAEARVPMGLGKWQHIEALGKLPAVDARWQAKFGRSMSAADIDAIYAAFMPLQIAKVVDFSSPIAGVIDTIAALRAEGIKIGSCSGYPRAVMERLVPAAAEHGYRPDHWVATDDLAAGGRPGPWMALQNVIALGIDAVAHCVKVDDAAPGISEGLNAGMWTVGLAVSGNEFGATWDAYQTMSKEDVAVRREHAASKLYAAGAHYVVDSLADLSGVIAHINARLAQGERP.

The active-site Nucleophile is D11. Mg(2+)-binding residues include D11 and A13. The Schiff-base intermediate with substrate role is filled by K53. D187 is a Mg(2+) binding site.

This sequence belongs to the HAD-like hydrolase superfamily. PhnX family. In terms of assembly, homodimer. Mg(2+) serves as cofactor.

It catalyses the reaction phosphonoacetaldehyde + H2O = acetaldehyde + phosphate + H(+). Its function is as follows. Involved in phosphonate degradation. The chain is Phosphonoacetaldehyde hydrolase from Salmonella enteritidis PT4 (strain P125109).